Consider the following 594-residue polypeptide: Arginine--tRNA ligase (594 aa).

The 'HIGH' region signature appears at 139-149 (ANPTGPLHVGH).

It belongs to the class-I aminoacyl-tRNA synthetase family. Monomer.

Its subcellular location is the cytoplasm. The catalysed reaction is tRNA(Arg) + L-arginine + ATP = L-arginyl-tRNA(Arg) + AMP + diphosphate. This Burkholderia mallei (strain NCTC 10247) protein is Arginine--tRNA ligase.